Consider the following 2083-residue polypeptide: Centriole proteome protein 16 (2083 aa).

Residues 205 to 333 (DAPTMDFMPP…PAVPPPLSPS (129 aa)) form a disordered region. A compositionally biased stretch (low complexity) spans 227–245 (TAETADTAGAAGRKSLSGA). Residues 246-258 (SAGGAGPAKGGAK) show a composition bias toward gly residues. Low complexity-rich tracts occupy residues 259–274 (AGAA…SAGA) and 283–292 (GSTAGAATPG). A compositionally biased stretch (acidic residues) spans 302–315 (GEEDFEDDLSEDLD). Over residues 319–331 (PLPPSPAVPPPLS) the composition is skewed to pro residues. WD repeat units lie at residues 482–523 (GHTA…CLAI), 526–569 (AHAS…AAGG), 579–620 (ATEY…GTSV), 689–726 (LHAA…YLLE), 728–767 (EHEG…YTTL), 770–809 (SHCG…QLYE), 812–853 (APGE…LLQE), 856–895 (QHRA…APAQ), 990–1029 (VSPL…ALRG), and 1041–1079 (GHPS…MQQE). 2 disordered regions span residues 1113-1141 (HTQA…VASA) and 1225-1276 (ALVV…PPPP). A compositionally biased stretch (pro residues) spans 1263–1276 (VPLPPSPQPLPPPP). 7 WD repeats span residues 1326 to 1365 (GHNR…RAAQ), 1403 to 1444 (YHPL…LVAA), 1448 to 1486 (EQSP…LEQR), 1497 to 1539 (RDPR…QPPQ), 1651 to 1691 (GQAA…AEPA), 1736 to 1781 (DPLD…QLSW), and 1785 to 1824 (RHPA…LVSY). The segment at 1713 to 1743 (APAHTLRHPPSAAPSSAASSSPLDPLDPLPA) is disordered. Residues 1720–1743 (HPPSAAPSSAASSSPLDPLDPLPA) show a composition bias toward low complexity. The disordered stretch occupies residues 1832–1870 (GPTPHSPGGTGRRSPRGAASPPPAPPRPGTGPLQAMAVS). Residues 1851-1860 (SPPPAPPRPG) show a composition bias toward pro residues. The WD 18 repeat unit spans residues 2035–2073 (GHAGAVAAASYTGDGGHAVTASGSVLMVWDAAQLLKGVT).

It belongs to the WD repeat WDR90/POC16 family.

It is found in the cytoplasm. It localises to the cytoskeleton. The protein localises to the microtubule organizing center. The protein resides in the centrosome. Its subcellular location is the centriole. Required for flagellum assembly and/or maintenance. This is Centriole proteome protein 16 from Chlamydomonas reinhardtii (Chlamydomonas smithii).